The primary structure comprises 328 residues: Stress response kinase A (328 aa).

Aspartate 201 (proton acceptor) is an active-site residue. Asparagine 206 and aspartate 217 together coordinate Mg(2+). Aspartate 217 is an active-site residue.

It belongs to the SrkA/RdoA protein kinase family. In terms of assembly, monomer. It depends on Mg(2+) as a cofactor.

Its subcellular location is the cytoplasm. It carries out the reaction L-seryl-[protein] + ATP = O-phospho-L-seryl-[protein] + ADP + H(+). The enzyme catalyses L-threonyl-[protein] + ATP = O-phospho-L-threonyl-[protein] + ADP + H(+). Functionally, a protein kinase that phosphorylates Ser and Thr residues. Probably acts to suppress the effects of stress linked to accumulation of reactive oxygen species. Probably involved in the extracytoplasmic stress response. The polypeptide is Stress response kinase A (Escherichia coli O157:H7).